Consider the following 352-residue polypeptide: Photosystem II D2 protein (352 aa).

A helical membrane pass occupies residues Cys-40–Thr-60. Residue His-117 coordinates chlorophyll a. Residues Gly-124 to Pro-140 traverse the membrane as a helical segment. Gln-129 and Asn-142 together coordinate pheophytin a. A helical transmembrane segment spans residues Val-152–Ser-165. His-197 serves as a coordination point for chlorophyll a. A helical transmembrane segment spans residues Gly-207–Asp-227. A plastoquinone contacts are provided by His-214 and Phe-261. His-214 provides a ligand contact to Fe cation. Position 268 (His-268) interacts with Fe cation. A helical transmembrane segment spans residues Gly-278–Arg-294.

This sequence belongs to the reaction center PufL/M/PsbA/D family. As to quaternary structure, PSII is composed of 1 copy each of membrane proteins PsbA, PsbB, PsbC, PsbD, PsbE, PsbF, PsbH, PsbI, PsbJ, PsbK, PsbL, PsbM, PsbT, PsbX, PsbY, PsbZ, Psb30/Ycf12, peripheral proteins PsbO, CyanoQ (PsbQ), PsbU, PsbV and a large number of cofactors. It forms dimeric complexes. It depends on The D1/D2 heterodimer binds P680, chlorophylls that are the primary electron donor of PSII, and subsequent electron acceptors. It shares a non-heme iron and each subunit binds pheophytin, quinone, additional chlorophylls, carotenoids and lipids. There is also a Cl(-1) ion associated with D1 and D2, which is required for oxygen evolution. The PSII complex binds additional chlorophylls, carotenoids and specific lipids. as a cofactor.

It is found in the cellular thylakoid membrane. The catalysed reaction is 2 a plastoquinone + 4 hnu + 2 H2O = 2 a plastoquinol + O2. Its function is as follows. Photosystem II (PSII) is a light-driven water:plastoquinone oxidoreductase that uses light energy to abstract electrons from H(2)O, generating O(2) and a proton gradient subsequently used for ATP formation. It consists of a core antenna complex that captures photons, and an electron transfer chain that converts photonic excitation into a charge separation. The D1/D2 (PsbA/PsbD) reaction center heterodimer binds P680, the primary electron donor of PSII as well as several subsequent electron acceptors. D2 is needed for assembly of a stable PSII complex. The polypeptide is Photosystem II D2 protein (Picosynechococcus sp. (strain ATCC 27264 / PCC 7002 / PR-6) (Agmenellum quadruplicatum)).